The primary structure comprises 246 residues: PARP-type zinc finger-containing protein C2A9.07c (246 aa).

Residues 8-99 (YRVELAKTGR…EKILRAFEQG (92 aa)) form a PARP-type; degenerate zinc finger. Basic and acidic residues predominate over residues 103-126 (EEDEERCRKMASDASEEKDRKIEE). Residues 103–246 (EEDEERCRKM…ESGNEYSDSD (144 aa)) are disordered. Threonine 130 carries the phosphothreonine modification. Residue serine 131 is modified to Phosphoserine. Residues 157–168 (NKKHKAERKRSP) are compositionally biased toward basic residues. Acidic residues predominate over residues 175-184 (LEDDEEIEDV). Residues 185–196 (ASDKDEEEKPWS) are compositionally biased toward basic and acidic residues. A compositionally biased stretch (acidic residues) spans 197-215 (GDEEDDDELVVKDSEDETE). Serine 243 and serine 245 each carry phosphoserine.

The protein localises to the nucleus. Its subcellular location is the mitochondrion. In Schizosaccharomyces pombe (strain 972 / ATCC 24843) (Fission yeast), this protein is PARP-type zinc finger-containing protein C2A9.07c.